A 199-amino-acid chain; its full sequence is Recombination protein RecR (199 aa).

Residues 57–72 (CSVCGNITEQDPCAIC) form a C4-type zinc finger. The 97-residue stretch at 80 to 176 (STIMVVEEAK…KVTRLAAGLA (97 aa)) folds into the Toprim domain.

Belongs to the RecR family.

Functionally, may play a role in DNA repair. It seems to be involved in an RecBC-independent recombinational process of DNA repair. It may act with RecF and RecO. This is Recombination protein RecR from Lactobacillus delbrueckii subsp. bulgaricus (strain ATCC BAA-365 / Lb-18).